The chain runs to 594 residues: Class I diterpene synthase TPS6, chloroplastic (594 aa).

Mg(2+) contacts are provided by aspartate 330, aspartate 334, asparagine 474, glutamine 477, and glutamate 482. Positions aspartate 330–aspartate 334 match the DDXXD motif motif.

This sequence belongs to the terpene synthase family. It depends on Mg(2+) as a cofactor. In terms of tissue distribution, mostly expressed in trichomes of leaves and fruits.

Its subcellular location is the plastid. It localises to the chloroplast. The enzyme catalyses peregrinol diphosphate = labd-13(16),14-diene-9-ol + diphosphate. It carries out the reaction 9alpha-copalyl diphosphate = syn-isopimara-7,15-diene + diphosphate. The protein operates within secondary metabolite biosynthesis; terpenoid biosynthesis. In terms of biological role, involved in the biosynthesis of labdane-type diterpenoid including cleroda-dienols, and peregrinol lactones and furan derivatives, dopaminergic diterpenoids that can bind to dopamine receptors in the human pituitary gland, have probably ability to lower prolactin levels, and are used to treat menstrual cycle disorders (e.g. premenstrual syndrome and mastodynia). Terpene synthase the catalyzes the conversion of peregrinol diphosphate to labda-13(16),14-dien-9-ol, and of syn-copalyl diphosophate to dehydroabietadiene and syn-isopimara-7,15-diene. This is Class I diterpene synthase TPS6, chloroplastic from Vitex agnus-castus (Chaste tree).